A 525-amino-acid chain; its full sequence is Probable protein kinase UbiB (525 aa).

In terms of domain architecture, Protein kinase spans 118 to 500 (DFERVPVASA…QKRTNRLLQG (383 aa)). ATP contacts are provided by residues 124–132 (VASASIAQV) and K150. D285 functions as the Proton acceptor in the catalytic mechanism. The helical transmembrane segment at 501–521 (LLLFGVAVGVGAVLARAFLAL) threads the bilayer.

This sequence belongs to the ABC1 family. UbiB subfamily.

Its subcellular location is the cell inner membrane. Its pathway is cofactor biosynthesis; ubiquinone biosynthesis [regulation]. Functionally, is probably a protein kinase regulator of UbiI activity which is involved in aerobic coenzyme Q (ubiquinone) biosynthesis. This Paraburkholderia phytofirmans (strain DSM 17436 / LMG 22146 / PsJN) (Burkholderia phytofirmans) protein is Probable protein kinase UbiB.